Consider the following 922-residue polypeptide: Disintegrin and metalloproteinase domain-containing protein 10 homolog (922 aa).

The first 26 residues, methionine 1–glycine 26, serve as a signal peptide directing secretion. A propeptide spanning residues leucine 27 to arginine 228 is cleaved from the precursor. Residues asparagine 74, asparagine 185, and asparagine 346 are each glycosylated (N-linked (GlcNAc...) asparagine). The Extracellular segment spans residues alanine 229 to asparagine 745. In terms of domain architecture, Peptidase M12B spans arginine 242–leucine 480. Histidine 426 provides a ligand contact to Zn(2+). Glutamate 427 is a catalytic residue. The Zn(2+) site is built by histidine 430 and histidine 436. Cysteines 442 and 471 form a disulfide. N-linked (GlcNAc...) asparagine glycosylation occurs at asparagine 475. The 105-residue stretch at serine 511–aspartate 615 folds into the Disintegrin domain. 5 disulfide bridges follow: cysteine 542-cysteine 577, cysteine 564-cysteine 572, cysteine 588-cysteine 607, cysteine 594-cysteine 626, and cysteine 619-cysteine 631. Residue asparagine 632 is glycosylated (N-linked (GlcNAc...) asparagine). Intrachain disulfides connect cysteine 636/cysteine 659, cysteine 644/cysteine 665, cysteine 655/cysteine 707, and cysteine 700/cysteine 713. Residue asparagine 677 is glycosylated (N-linked (GlcNAc...) asparagine). The helical transmembrane segment at tryptophan 746–cysteine 766 threads the bilayer. Over cysteine 767 to lysine 922 the chain is Cytoplasmic. Disordered regions lie at residues glutamine 797–proline 837 and proline 864–lysine 922. A compositionally biased stretch (low complexity) spans alanine 805 to proline 834.

May interact with tetraspanin tsp-12; the interaction promotes sup-17 cell membrane localization. It depends on Zn(2+) as a cofactor. Expressed in the germline.

Its subcellular location is the cell membrane. It localises to the basolateral cell membrane. It is found in the cytoplasmic vesicle membrane. The enzyme catalyses Endopeptidase of broad specificity.. Metalloprotease. Acts together with protease adm-4 and in a cell autonomous manner to facilitate lin-12/Notch signaling during developmental cell fate decision, including anchor cell/ventral uterine precursor cell decision and vulva precursor cell specification. By modulating glp-1/Notch signaling, plays a role in germline development. Probably by modulating BMP-like Sma/Mab signaling via the shedding of unc-40 ectodomain, involved in the regulation of body size and mesoderm development. Probably by shedding ephrin efn-4, regulates axon guidance of SDQL neuron during development. The sequence is that of Disintegrin and metalloproteinase domain-containing protein 10 homolog from Caenorhabditis elegans.